Here is a 391-residue protein sequence, read N- to C-terminus: uncharacterized protein (391 aa).

Transmembrane regions (helical) follow at residues 15-35 (LSFCVVFLLRMLGIFSVLPIL), 48-68 (FLIGLAVGIYGATQIVFQIPF), 81-101 (IIFGLFIFFIGSLIVVSTNSI), 139-159 (IIGVSFAVSFLISVVSAPIIA), 167-187 (IFWISAVFSIFSILIVFFLIP), 217-237 (FYLGVFLLHFLLTMNFLIIPY), 251-271 (IVYFATIVFSFFFLFLIVFYF), 275-295 (FFLKNIIEICIFFIFLSLLLF), 303-323 (ICLTFALQIFFIAFNILEIFF), 346-366 (TSQFLGIACGGVLNGLLCTFF), and 369-389 (NHIFLFEIFITLIWFIFSFFC).

It belongs to the major facilitator superfamily.

The protein localises to the cell membrane. This is an uncharacterized protein from Buchnera aphidicola subsp. Schizaphis graminum (strain Sg).